Reading from the N-terminus, the 374-residue chain is Glyceraldehyde-3-phosphate dehydrogenase A, chloroplastic (374 aa).

Residues 1 to 34 (MAAMMQKSAFTGSAVSSKSGVRAKAARAVVDVRA) constitute a chloroplast transit peptide. Residues 47 to 48 (RI), Asp71, and Arg116 contribute to the NADP(+) site. Cys55 and Cys325 form a disulfide bridge. Residues 189–191 (SCT), Thr220, Arg235, 248–249 (TG), and Arg271 each bind D-glyceraldehyde 3-phosphate. Catalysis depends on Cys190, which acts as the Nucleophile. Asn353 is a binding site for NADP(+).

It belongs to the glyceraldehyde-3-phosphate dehydrogenase family. In terms of assembly, homotetramer. Component of a complex that contains two dimers of PRK, two tetramers of GAPDH and CP12. CP12 associates with GAPDH, causing its conformation to change. This GAPDH/CP12 complex binds PRK to form a half-complex (one unit). This unit probably dimerizes due partially to interactions between the enzymes of each unit.

Its subcellular location is the plastid. The protein resides in the chloroplast. It catalyses the reaction D-glyceraldehyde 3-phosphate + phosphate + NADP(+) = (2R)-3-phospho-glyceroyl phosphate + NADPH + H(+). Its pathway is carbohydrate biosynthesis; Calvin cycle. The chain is Glyceraldehyde-3-phosphate dehydrogenase A, chloroplastic (GAPA) from Chlamydomonas reinhardtii (Chlamydomonas smithii).